Here is a 277-residue protein sequence, read N- to C-terminus: Large ribosomal subunit protein uL2 (277 aa).

2 disordered regions span residues 32-58 and 225-277; these read KSLT…RGGG and VAMN…RRNK. Over residues 258-277 the composition is skewed to basic residues; sequence YKTRKKKRYSDKFIIKRRNK.

The protein belongs to the universal ribosomal protein uL2 family. In terms of assembly, part of the 50S ribosomal subunit. Forms a bridge to the 30S subunit in the 70S ribosome.

In terms of biological role, one of the primary rRNA binding proteins. Required for association of the 30S and 50S subunits to form the 70S ribosome, for tRNA binding and peptide bond formation. It has been suggested to have peptidyltransferase activity; this is somewhat controversial. Makes several contacts with the 16S rRNA in the 70S ribosome. This chain is Large ribosomal subunit protein uL2, found in Borreliella afzelii (strain PKo) (Borrelia afzelii).